Reading from the N-terminus, the 252-residue chain is Probable transcriptional regulatory protein HNE_0161 (252 aa).

This sequence belongs to the TACO1 family.

It localises to the cytoplasm. This chain is Probable transcriptional regulatory protein HNE_0161, found in Hyphomonas neptunium (strain ATCC 15444).